The chain runs to 72 residues: Translation initiation factor IF-1 (72 aa).

In terms of domain architecture, S1-like spans 1–72 (MSKEEVLEFS…TKGRITYRYK (72 aa)).

Belongs to the IF-1 family. Component of the 30S ribosomal translation pre-initiation complex which assembles on the 30S ribosome in the order IF-2 and IF-3, IF-1 and N-formylmethionyl-tRNA(fMet); mRNA recruitment can occur at any time during PIC assembly.

The protein resides in the cytoplasm. In terms of biological role, one of the essential components for the initiation of protein synthesis. Stabilizes the binding of IF-2 and IF-3 on the 30S subunit to which N-formylmethionyl-tRNA(fMet) subsequently binds. Helps modulate mRNA selection, yielding the 30S pre-initiation complex (PIC). Upon addition of the 50S ribosomal subunit IF-1, IF-2 and IF-3 are released leaving the mature 70S translation initiation complex. The polypeptide is Translation initiation factor IF-1 (Bartonella bacilliformis (strain ATCC 35685 / KC583 / Herrer 020/F12,63)).